The following is a 221-amino-acid chain: N-(5'-phosphoribosyl)anthranilate isomerase (221 aa).

The protein belongs to the TrpF family.

The enzyme catalyses N-(5-phospho-beta-D-ribosyl)anthranilate = 1-(2-carboxyphenylamino)-1-deoxy-D-ribulose 5-phosphate. Its pathway is amino-acid biosynthesis; L-tryptophan biosynthesis; L-tryptophan from chorismate: step 3/5. This is N-(5'-phosphoribosyl)anthranilate isomerase from Parabacteroides distasonis (strain ATCC 8503 / DSM 20701 / CIP 104284 / JCM 5825 / NCTC 11152).